The chain runs to 203 residues: Small ribosomal subunit protein uS4c (203 aa).

The disordered stretch occupies residues 18–42 (LPGLTSKRPKNRKDSMNMNRSSSRK). A compositionally biased stretch (polar residues) spans 33-42 (MNMNRSSSRK). The region spanning 91-152 (MRLDNIIFRL…QPRLRAIIKK (62 aa)) is the S4 RNA-binding domain.

It belongs to the universal ribosomal protein uS4 family. In terms of assembly, part of the 30S ribosomal subunit. Contacts protein S5. The interaction surface between S4 and S5 is involved in control of translational fidelity.

It is found in the plastid. It localises to the chloroplast. Its function is as follows. One of the primary rRNA binding proteins, it binds directly to 16S rRNA where it nucleates assembly of the body of the 30S subunit. With S5 and S12 plays an important role in translational accuracy. In Pinus koraiensis (Korean pine), this protein is Small ribosomal subunit protein uS4c (rps4).